The chain runs to 477 residues: Probable cytosol aminopeptidase (477 aa).

Positions 245 and 250 each coordinate Mn(2+). Lys257 is an active-site residue. Residues Asp268, Asp327, and Glu329 each contribute to the Mn(2+) site. Arg331 is an active-site residue.

This sequence belongs to the peptidase M17 family. Mn(2+) serves as cofactor.

It localises to the cytoplasm. The catalysed reaction is Release of an N-terminal amino acid, Xaa-|-Yaa-, in which Xaa is preferably Leu, but may be other amino acids including Pro although not Arg or Lys, and Yaa may be Pro. Amino acid amides and methyl esters are also readily hydrolyzed, but rates on arylamides are exceedingly low.. It catalyses the reaction Release of an N-terminal amino acid, preferentially leucine, but not glutamic or aspartic acids.. In terms of biological role, presumably involved in the processing and regular turnover of intracellular proteins. Catalyzes the removal of unsubstituted N-terminal amino acids from various peptides. The polypeptide is Probable cytosol aminopeptidase (Exiguobacterium sibiricum (strain DSM 17290 / CCUG 55495 / CIP 109462 / JCM 13490 / 255-15)).